The chain runs to 89 residues: uncharacterized protein (89 aa).

The signal sequence occupies residues 1 to 19; the sequence is MIVRTLLIAAALLGGTAQA.

It is found in the secreted. This is an uncharacterized protein from Pseudomonas aeruginosa (strain UCBPP-PA14).